The following is a 335-amino-acid chain: Methionine import ATP-binding protein MetN (335 aa).

The ABC transporter domain maps to 2-241 (IQFQRLHKSY…PQHPTTRRFV (240 aa)). 38-45 (GHSGAGKS) is a binding site for ATP.

It belongs to the ABC transporter superfamily. Methionine importer (TC 3.A.1.24) family. The complex is composed of two ATP-binding proteins (MetN), two transmembrane proteins (MetI) and a solute-binding protein (MetQ).

The protein resides in the cell inner membrane. It catalyses the reaction L-methionine(out) + ATP + H2O = L-methionine(in) + ADP + phosphate + H(+). The catalysed reaction is D-methionine(out) + ATP + H2O = D-methionine(in) + ADP + phosphate + H(+). In terms of biological role, part of the ABC transporter complex MetNIQ involved in methionine import. Responsible for energy coupling to the transport system. In Xanthomonas campestris pv. campestris (strain 8004), this protein is Methionine import ATP-binding protein MetN.